The chain runs to 867 residues: Coiled-coil domain-containing protein 178 (867 aa).

Coiled-coil stretches lie at residues 153–204 (DEKC…KIDS), 233–414 (WHLE…ENQY), 445–470 (ACTKLTEDNKKLEIDINKITVKTNES), and 662–696 (MIFYAKINELNEELKAKEEEKKSFDQTLEILKNKF).

The polypeptide is Coiled-coil domain-containing protein 178 (CCDC178) (Homo sapiens (Human)).